A 523-amino-acid chain; its full sequence is GMP synthase [glutamine-hydrolyzing] (523 aa).

A Glutamine amidotransferase type-1 domain is found at 9 to 198; that stretch reads PVLVVDFGAQ…LTEIAGLEQN (190 aa). Cys-86 functions as the Nucleophile in the catalytic mechanism. Active-site residues include His-172 and Glu-174. Residues 199-397 form the GMPS ATP-PPase domain; that stretch reads WTAANIAEEL…LGLPEEIVGR (199 aa). 227–233 serves as a coordination point for ATP; it reads SGGVDSA.

In terms of assembly, homodimer.

The enzyme catalyses XMP + L-glutamine + ATP + H2O = GMP + L-glutamate + AMP + diphosphate + 2 H(+). The protein operates within purine metabolism; GMP biosynthesis; GMP from XMP (L-Gln route): step 1/1. Catalyzes the synthesis of GMP from XMP. The protein is GMP synthase [glutamine-hydrolyzing] of Corynebacterium glutamicum (strain ATCC 13032 / DSM 20300 / JCM 1318 / BCRC 11384 / CCUG 27702 / LMG 3730 / NBRC 12168 / NCIMB 10025 / NRRL B-2784 / 534).